A 460-amino-acid polypeptide reads, in one-letter code: WD repeat-containing protein 41 (460 aa).

WD repeat units lie at residues E40–E79, G82–R128, C131–T168, D220–C258, A321–A359, and G403–R441.

As to quaternary structure, component of the C9orf72-SMCR8 complex, at least composed of C9orf72, SMCR8 and WDR41. The complex is formed of two protomers, each individually consisting of one molecule each of C9orf72, SMCR8 and WDR41. The protomers homodimerize via an interaction between C9orf72 (via C-terminus) and SMCR8 (via N-terminus). Within each protomer SMCR8 (via DENN domain) acts as a bridging protein between WDR41 (via C-terminus and N-terminus) and C9orf72 (via C-terminus). The C9orf72-SMCR8 complex associates with the ULK1/ATG1 kinase complex.

The protein resides in the cytoplasm. In terms of biological role, non-catalytic component of the C9orf72-SMCR8 complex, a complex that has guanine nucleotide exchange factor (GEF) activity and regulates autophagy. The C9orf72-SMCR8 complex promotes the exchange of GDP to GTP, converting inactive GDP-bound RAB8A and RAB39B into their active GTP-bound form, thereby promoting autophagosome maturation. As part of the C9orf72-SMCR8 complex, stimulates RAB8A and RAB11A GTPase activity in vitro, however WDR42 is shown not be an essential complex component for this function. The C9orf72-SMCR8 complex also acts as a negative regulator of autophagy initiation by interacting with the ULK1/ATG1 kinase complex and inhibiting its protein kinase activity. This chain is WD repeat-containing protein 41, found in Mus musculus (Mouse).